Consider the following 1131-residue polypeptide: Kinesin-like protein CG14535 (1131 aa).

Residues methionine 1–arginine 11 show a composition bias toward polar residues. The interval methionine 1–proline 25 is disordered. The 353-residue stretch at lysine 44–leucine 396 folds into the Kinesin motor domain. Disordered regions lie at residues alanine 472–lysine 494, aspartate 693–isoleucine 753, proline 905–leucine 926, and threonine 1016–arginine 1072. The segment covering serine 483–lysine 494 has biased composition (low complexity). Over residues threonine 1016 to arginine 1032 the composition is skewed to polar residues.

Belongs to the TRAFAC class myosin-kinesin ATPase superfamily. Kinesin family. KIF26 subfamily.

Its subcellular location is the cytoplasm. It is found in the cytoskeleton. This is Kinesin-like protein CG14535 from Drosophila melanogaster (Fruit fly).